The primary structure comprises 131 residues: Small ribosomal subunit protein uS8 (131 aa).

The protein belongs to the universal ribosomal protein uS8 family. In terms of assembly, part of the 30S ribosomal subunit. Contacts proteins S5 and S12.

Its function is as follows. One of the primary rRNA binding proteins, it binds directly to 16S rRNA central domain where it helps coordinate assembly of the platform of the 30S subunit. The polypeptide is Small ribosomal subunit protein uS8 (Desulforudis audaxviator (strain MP104C)).